Consider the following 208-residue polypeptide: Large ribosomal subunit protein uL4 (208 aa).

Residues 46–97 (QGTHKTKTRAEVRGGGKKPYRQKGTGNARQGSSRSPIMVGGGTIFGPQPRSY) are disordered. The span at 69–80 (GTGNARQGSSRS) shows a compositional bias: polar residues.

Belongs to the universal ribosomal protein uL4 family. In terms of assembly, part of the 50S ribosomal subunit.

Its function is as follows. One of the primary rRNA binding proteins, this protein initially binds near the 5'-end of the 23S rRNA. It is important during the early stages of 50S assembly. It makes multiple contacts with different domains of the 23S rRNA in the assembled 50S subunit and ribosome. Functionally, forms part of the polypeptide exit tunnel. The chain is Large ribosomal subunit protein uL4 from Chlorobaculum parvum (strain DSM 263 / NCIMB 8327) (Chlorobium vibrioforme subsp. thiosulfatophilum).